Consider the following 241-residue polypeptide: MATPHINAEMGDFADVVLMPGDPLRAKYIAETFLQDVKEVCNVRSMFGYTGTYKGRKISVMGHGMGIPSCSIYATELIKDFGVKKIIRVGSCGAVRDDVKLRDVVIGMGASTDSKVNRIRFGGHDFAAIADFGMVQNAVDAAKAKGIPVKVGNIFSADLFYNPDFEFFKTMDKYGIVGVEMEAAGIYGVAAEFGAKALTICTVSDHILRGEATTSEERQLTFNEMMEIALESVLLGDADEA.

Residue His-5 participates in a purine D-ribonucleoside binding. Phosphate is bound by residues Gly-21, Arg-25, Arg-44, and 88–91; that span reads RVGS. Residues 180-182 and 204-205 contribute to the a purine D-ribonucleoside site; these read EME and SD. The active-site Proton donor is the Asp-205.

This sequence belongs to the PNP/UDP phosphorylase family. In terms of assembly, homohexamer; trimer of homodimers.

The catalysed reaction is a purine D-ribonucleoside + phosphate = a purine nucleobase + alpha-D-ribose 1-phosphate. The enzyme catalyses a purine 2'-deoxy-D-ribonucleoside + phosphate = a purine nucleobase + 2-deoxy-alpha-D-ribose 1-phosphate. Its function is as follows. Catalyzes the reversible phosphorolytic breakdown of the N-glycosidic bond in the beta-(deoxy)ribonucleoside molecules, with the formation of the corresponding free purine bases and pentose-1-phosphate. This chain is Purine nucleoside phosphorylase DeoD-type 1, found in Photobacterium profundum (strain SS9).